The sequence spans 666 residues: Phosphoenolpyruvate carboxykinase (ATP) (666 aa).

Disordered regions lie at residues 1 to 68 and 91 to 132; these read MATP…AHSP and ASLT…HPAA. Residues 48–58 show a composition bias toward polar residues; sequence APTTPNRSAPT. A compositionally biased stretch (low complexity) spans 109–123; that stretch reads KGEAAAQGAPSTPRA. 364–371 is a binding site for ATP; sequence GLSGTGKT.

Belongs to the phosphoenolpyruvate carboxykinase (ATP) family.

Its subcellular location is the cytoplasm. It carries out the reaction oxaloacetate + ATP = phosphoenolpyruvate + ADP + CO2. It participates in carbohydrate biosynthesis; gluconeogenesis. This Zea mays (Maize) protein is Phosphoenolpyruvate carboxykinase (ATP).